Consider the following 97-residue polypeptide: Protein Vpr (97 aa).

The interval 1 to 42 (MEQAPENQGPAKEPFNEWALELLEELKAEAVRHFPRPWLHAL) is homooligomerization. Phosphoserine; by host occurs at positions 79, 95, and 97.

Belongs to the HIV-1 VPR protein family. Homooligomer, may form homodimer. Interacts with p6-gag region of the Pr55 Gag precursor protein through a (Leu-X-X)4 motif near the C-terminus of the P6gag protein. Interacts with host UNG. May interact with host RAD23A/HHR23A. Interacts with host VPRBP/DCAF1, leading to hijack the CUL4A-RBX1-DDB1-DCAF1/VPRBP complex, mediating ubiquitination of host proteins such as TERT and ZGPAT and arrest of the cell cycle in G2 phase. Post-translationally, phosphorylated on several residues by host. These phosphorylations regulate VPR activity for the nuclear import of the HIV-1 pre-integration complex.

The protein localises to the virion. The protein resides in the host nucleus. Its subcellular location is the host extracellular space. Functionally, during virus replication, may deplete host UNG protein, and incude G2-M cell cycle arrest. Acts by targeting specific host proteins for degradation by the 26S proteasome, through association with the cellular CUL4A-DDB1 E3 ligase complex by direct interaction with host VPRPB/DCAF-1. Cell cycle arrest reportedly occurs within hours of infection and is not blocked by antiviral agents, suggesting that it is initiated by the VPR carried into the virion. Additionally, VPR induces apoptosis in a cell cycle dependent manner suggesting that these two effects are mechanistically linked. Detected in the serum and cerebrospinal fluid of AIDS patient, VPR may also induce cell death to bystander cells. In terms of biological role, during virus entry, plays a role in the transport of the viral pre-integration (PIC) complex to the host nucleus. This function is crucial for viral infection of non-dividing macrophages. May act directly at the nuclear pore complex, by binding nucleoporins phenylalanine-glycine (FG)-repeat regions. The sequence is that of Protein Vpr from Human immunodeficiency virus type 1 group O (isolate ANT70) (HIV-1).